The chain runs to 76 residues: UPF0729 protein C18orf32 homolog (76 aa).

A necessary for its localzation to the endoplasmic reticulum and lipid droplets region spans residues 1–37 (MVCIPCIVIPVLLWVYKKFLEPYIYPLISPFVSRMWP). Residues 47 to 56 (KNKGKVDYKG) show a composition bias toward basic and acidic residues. The disordered stretch occupies residues 47 to 76 (KNKGKVDYKGADINGLPTRGPTEMCDKKKD).

This sequence belongs to the UPF0729 family. As to quaternary structure, interacts with DERL1 and AMFR. In terms of processing, undergoes ER-associated degradation (ERAD).

Its subcellular location is the endoplasmic reticulum. The protein resides in the lipid droplet. In terms of biological role, may activate the NF-kappa-B signaling pathway. In Bos taurus (Bovine), this protein is UPF0729 protein C18orf32 homolog.